Here is a 304-residue protein sequence, read N- to C-terminus: ATP phosphoribosyltransferase (304 aa).

Belongs to the ATP phosphoribosyltransferase family. Long subfamily. Mg(2+) is required as a cofactor.

Its subcellular location is the cytoplasm. The enzyme catalyses 1-(5-phospho-beta-D-ribosyl)-ATP + diphosphate = 5-phospho-alpha-D-ribose 1-diphosphate + ATP. The protein operates within amino-acid biosynthesis; L-histidine biosynthesis; L-histidine from 5-phospho-alpha-D-ribose 1-diphosphate: step 1/9. With respect to regulation, feedback inhibited by histidine. In terms of biological role, catalyzes the condensation of ATP and 5-phosphoribose 1-diphosphate to form N'-(5'-phosphoribosyl)-ATP (PR-ATP). Has a crucial role in the pathway because the rate of histidine biosynthesis seems to be controlled primarily by regulation of HisG enzymatic activity. The chain is ATP phosphoribosyltransferase from Xylella fastidiosa (strain 9a5c).